Reading from the N-terminus, the 149-residue chain is Large ribosomal subunit protein uL15 (149 aa).

Positions 14–57 (KQRKRVGRGSGSGWGCTSGKGNKGQNARSGGGVRPGFEGGQMPL) are disordered. 2 stretches are compositionally biased toward gly residues: residues 21-35 (RGSG…GKGN) and 42-52 (SGGGVRPGFEG).

This sequence belongs to the universal ribosomal protein uL15 family. In terms of assembly, part of the 50S ribosomal subunit.

Its function is as follows. Binds to the 23S rRNA. The polypeptide is Large ribosomal subunit protein uL15 (Oleidesulfovibrio alaskensis (strain ATCC BAA-1058 / DSM 17464 / G20) (Desulfovibrio alaskensis)).